A 178-amino-acid polypeptide reads, in one-letter code: Protamine-like protein (178 aa).

Disordered stretches follow at residues 1–27 and 77–178; these read PSTT…TVSD and SVVK…RAKK. Basic residues-rich tracts occupy residues 8–21 and 94–178; these read SPKR…RKRT and PRRR…RAKK. The H15 domain maps to 21 to 89; it reads TGPTVSDLIL…KAKGFYKLNK (69 aa).

Male germ cells.

The protein resides in the nucleus. Its subcellular location is the chromosome. Replaces histones in the chromatin of sperm during the haploid phase of spermatogenesis. Compacts sperm DNA into a highly condensed, stable and inactive complex. The protein is Protamine-like protein of Mullus surmuletus (Striped red mullet).